The following is a 206-amino-acid chain: Protein YmaB (206 aa).

The sequence is that of Protein YmaB (ymaB) from Bacillus subtilis (strain 168).